A 281-amino-acid polypeptide reads, in one-letter code: uncharacterized protein (281 aa).

8 helical membrane passes run 30 to 50, 54 to 74, 76 to 96, 106 to 126, 153 to 173, 198 to 218, 235 to 255, and 259 to 279; these read AIVA…FIVI, VFIS…GYYF, FNPL…MGWV, TLIG…IDLT, AGLD…FLAI, IALT…IALL, MMAV…ALSY, and LSSG…SLAF.

The protein belongs to the ABC-3 integral membrane protein family.

The protein resides in the cell membrane. This is an uncharacterized protein from Synechocystis sp. (strain ATCC 27184 / PCC 6803 / Kazusa).